We begin with the raw amino-acid sequence, 127 residues long: MKLTILRLEHFSAQDQIDLGKIWPEYSASSLSVDETHRIYAARFNERLLGAVRVTLSGTQGALDSLRVREITRRRGVGQYLVEEVIRDNPNVSSWWMADVGVEDRSVMAAFMQALGFTAQHDGWEKR.

The N-acetyltransferase domain occupies 1–127; sequence MKLTILRLEH…TAQHDGWEKR (127 aa). CoA-binding positions include 66 to 68 and 72 to 79; these read LRV and TRRRGVGQ.

The protein belongs to the PanZ/PanM family. Interacts with PanD in the presence of CoA. Monomer.

Its function is as follows. Controls both the activation and catalytic activity of PanD in a coenzyme A (CoA)-dependent fashion. Binding of CoA or a derivative to PanM leads to interaction with PanD, which promotes the processing and activation of pro-PanD, and subsequent substrate-mediated inhibition of the active form of PanD. Lacks acetyltransferase activity. This Salmonella typhimurium (strain LT2 / SGSC1412 / ATCC 700720) protein is PanD regulatory factor.